Consider the following 242-residue polypeptide: Myogenic factor 6 (242 aa).

A disordered region spans residues 31 to 63 (SPLYPGSDGTLSPCQDQMPPEAGSDSSGEEHVL). Residues 93–144 (DRRKAATLRERRRLKKINEAFEALKRRTVANPNQRLPKVEILRSAINYIERL) form the bHLH domain.

Efficient DNA binding requires dimerization with another bHLH protein. Interacts with CSRP3.

Its subcellular location is the nucleus. In terms of biological role, involved in muscle differentiation (myogenic factor). Induces fibroblasts to differentiate into myoblasts. Probable sequence specific DNA-binding protein. The sequence is that of Myogenic factor 6 (MYF6) from Bos taurus (Bovine).